The primary structure comprises 796 residues: Peroxisome proliferator-activated receptor gamma coactivator 1-alpha (796 aa).

Lys77 carries the post-translational modification N6-acetyllysine. The interval 98 to 138 (PVDEDGLPSFDALTDGDVTTDNEASPSSMPDGTPPPQEAEE) is disordered. Polar residues predominate over residues 114-127 (DVTTDNEASPSSMP). The LXXLL motif motif lies at 142–146 (LKKLL). Residue Lys144 is modified to N6-acetyllysine. Thr176 carries the phosphothreonine; by AMPK modification. Lys182 carries the post-translational modification N6-acetyllysine. The segment at 211–275 (YLTTNDDPPH…NDPKGSPFEN (65 aa)) is disordered. The segment covering 217–235 (DPPHTKPTENRNSSRDKCA) has biased composition (basic and acidic residues). A compositionally biased stretch (polar residues) spans 242–258 (TQPQSQHAQAKPTTLSL). An N6-acetyllysine mark is found at Lys252, Lys269, Lys276, Lys319, Lys345, Lys411, Lys440, and Lys449. The interval 288–350 (GTAGLTPPTT…HSTKKGPEQS (63 aa)) is disordered. An interaction with PPARG region spans residues 291 to 337 (GLTPPTTPPHKANQDNPFKASPKLKPSCKTVVPPPTKRARYSECSGT). The tract at residues 348–796 (EQSELYAQLS…LKEAQRSLRR (449 aa)) is mediates interaction with RNF34. Ser537 carries the post-translational modification Phosphoserine; by AMPK. Disordered stretches follow at residues 541 to 597 (FNSP…SSRS) and 611 to 669 (HRNS…QKQK). Residues 561-576 (QRMRSRSRSFSRHRSC) are compositionally biased toward basic residues. Residues 577 to 597 (SRSPYSRSRSRSPGSRSSSRS) are compositionally biased toward low complexity. Residues 620–629 (SRSRSPYSRR) are compositionally biased toward basic residues. Residues 630–669 (PRYDSYEANEHERLKRDEYRREYEKRESERAKQRERQKQK) show a composition bias toward basic and acidic residues. The RRM domain maps to 675–751 (RVIYVGKIRP…TDFELYFCGR (77 aa)). Residues Lys756 and Lys777 each carry the N6-acetyllysine modification.

As to quaternary structure, homooligomer. Interacts with MYBBP1A; inhibits MYBBP1A transcriptional activation. Interacts with PRDM16, LPIN1 and PML. Interacts (via LXXLL motif) with RORA and RORC (via AF-2 motif); activates RORA and RORC transcriptional activation. Interacts with LRPPRC. Interacts with FOXO1. Interacts with NR5A2. Phosphorylation by AMPK in skeletal muscle increases activation of its own promoter. Phosphorylated by CLK2. In terms of processing, heavily acetylated by KAT2A/GCN5 under conditions of high nutrients, leading to inactivation of PPARGC1A. Deacetylated by SIRT1 in low nutrients/high NAD conditions, leading to its activation. Post-translationally, ubiquitinated. Ubiquitination by RNF34 induces proteasomal degradation.

Its subcellular location is the nucleus. It is found in the PML body. Functionally, transcriptional coactivator for steroid receptors and nuclear receptors. Greatly increases the transcriptional activity of PPARG and thyroid hormone receptor on the uncoupling protein promoter. Can regulate key mitochondrial genes that contribute to the program of adaptive thermogenesis. Plays an essential role in metabolic reprogramming in response to dietary availability through coordination of the expression of a wide array of genes involved in glucose and fatty acid metabolism. Acts as a key regulator of gluconeogenesis: stimulates hepatic gluconeogenesis by increasing the expression of gluconeogenic enzymes, and acting together with FOXO1 to promote the fasting gluconeogenic program. Induces the expression of PERM1 in the skeletal muscle in an ESRRA-dependent manner. Also involved in the integration of the circadian rhythms and energy metabolism. Required for oscillatory expression of clock genes, such as BMAL1 and NR1D1, through the coactivation of RORA and RORC, and metabolic genes, such as PDK4 and PEPCK. The polypeptide is Peroxisome proliferator-activated receptor gamma coactivator 1-alpha (Ppargc1a) (Rattus norvegicus (Rat)).